The following is a 467-amino-acid chain: Uronate isomerase (467 aa).

The protein belongs to the metallo-dependent hydrolases superfamily. Uronate isomerase family.

It carries out the reaction D-glucuronate = D-fructuronate. It catalyses the reaction aldehydo-D-galacturonate = keto-D-tagaturonate. It functions in the pathway carbohydrate metabolism; pentose and glucuronate interconversion. The polypeptide is Uronate isomerase (Geobacillus thermodenitrificans (strain NG80-2)).